Reading from the N-terminus, the 570-residue chain is MPFKMSRAAYASMFGPTTGDKVRLADTELFIEVEKDFTHYGDEVKFGGGKVIRDGMGQSQATRVDGAVDTVITNALIVDHWGIVKADIGLKDGRIVAIGKAGNPDTQPGVNIIVGPGTEAIAGEGKIVTAGGMDSHIHFICPQQIEEALMSGLTCMLGGGTGPAHGTLATTCTPGPWHIARMIEAADAFPMNLAFAGKGNASLPGALEEMVLGGACALKLHEDWGTTPGAVDCCLSVADDYDVQVMIHTDTLNESGFVEDSIGAIKGRTIHAFHTEGAGGGHAPDIIKICGQPNVIPSSTNPTRPYTINTLAEHLDMLMVCHHLSPSIPEDIAFAESRIRKETIAAEDILHDIGAFSIISSDSQAMGRVGEVAIRTWQTADKMKRQRGRLPSETGENDNMRVKRYIAKYTINPAIAHGLSHEIGSIEIGKRADLVIWNPAFFGVKPDMVLLGGSIAAAPMGDPNASIPTPQPVHYRHMFGAYGKARTNSSVTFVSQASLDVGLAARLGVSKQLLAVKNTRGGISKASMIHNSLTPHIEVDPETYEVRADGELLTCEPATVLPMAQRYFLF.

The region spanning 131–570 (GGMDSHIHFI…LPMAQRYFLF (440 aa)) is the Urease domain. The Ni(2+) site is built by His136, His138, and Lys219. Lys219 is modified (N6-carboxylysine). A substrate-binding site is contributed by His221. His248 and His274 together coordinate Ni(2+). His322 serves as the catalytic Proton donor. Asp362 contacts Ni(2+).

Belongs to the metallo-dependent hydrolases superfamily. Urease alpha subunit family. In terms of assembly, heterotrimer of UreA (gamma), UreB (beta) and UreC (alpha) subunits. Three heterotrimers associate to form the active enzyme. Requires Ni cation as cofactor. Carboxylation allows a single lysine to coordinate two nickel ions.

It localises to the cytoplasm. It catalyses the reaction urea + 2 H2O + H(+) = hydrogencarbonate + 2 NH4(+). It functions in the pathway nitrogen metabolism; urea degradation; CO(2) and NH(3) from urea (urease route): step 1/1. This Allorhizobium ampelinum (strain ATCC BAA-846 / DSM 112012 / S4) (Agrobacterium vitis (strain S4)) protein is Urease subunit alpha.